The following is a 153-amino-acid chain: uncharacterized protein (153 aa).

Residues 72-98 (LPISKTNDAERSQQTTKAPVMERTESS) are disordered.

The protein resides in the cytoplasm. It localises to the nucleus. This is an uncharacterized protein from Schizosaccharomyces pombe (strain 972 / ATCC 24843) (Fission yeast).